A 249-amino-acid polypeptide reads, in one-letter code: Probable phosphoglycerate mutase (249 aa).

Residues 9–16 (RHGESTWN), 22–23 (TG), Arg-61, 88–91 (ERMY), Lys-99, 115–116 (RR), and 184–185 (GN) contribute to the substrate site. His-10 serves as the catalytic Tele-phosphohistidine intermediate. Glu-88 serves as the catalytic Proton donor/acceptor.

It belongs to the phosphoglycerate mutase family. BPG-dependent PGAM subfamily. In terms of assembly, homodimer.

The enzyme catalyses (2R)-2-phosphoglycerate = (2R)-3-phosphoglycerate. It carries out the reaction (2R)-3-phospho-glyceroyl phosphate = (2R)-2,3-bisphosphoglycerate + H(+). Its function is as follows. Catalyzes the interconversion of 2-phosphoglycerate and 3-phosphoglycerate. In Dictyostelium discoideum (Social amoeba), this protein is Probable phosphoglycerate mutase (gpmA).